The chain runs to 931 residues: Dymeclin (931 aa).

3 disordered regions span residues 1-53 (MGVA…SSTT), 599-618 (SPSKINTNNSNNNVKDNTNN), and 839-931 (DANN…EKTN). Gly-2 carries the N-myristoyl glycine lipid modification. Low complexity-rich tracts occupy residues 27–49 (NNNKNNNNNNNNNNNNNNNNNNN) and 601–618 (SKINTNNSNNNVKDNTNN). The span at 839-858 (DANNFTPKKQLSSDQLHSPP) shows a compositional bias: polar residues. Composition is skewed to low complexity over residues 859 to 876 (TNTTTTTTTTTNSTSSNT) and 889 to 901 (QLQQQNNLRNQEQ). A compositionally biased stretch (polar residues) spans 919 to 931 (TTGVELSSTEKTN).

The protein belongs to the dymeclin family.

This chain is Dymeclin (dym), found in Dictyostelium discoideum (Social amoeba).